Reading from the N-terminus, the 443-residue chain is Xaa-Pro dipeptidase (443 aa).

Mn(2+)-binding residues include D246, D257, H339, E384, and E423.

The protein belongs to the peptidase M24B family. Bacterial-type prolidase subfamily. It depends on Mn(2+) as a cofactor.

It carries out the reaction Xaa-L-Pro dipeptide + H2O = an L-alpha-amino acid + L-proline. Its function is as follows. Splits dipeptides with a prolyl residue in the C-terminal position. This is Xaa-Pro dipeptidase from Edwardsiella ictaluri (strain 93-146).